We begin with the raw amino-acid sequence, 359 residues long: Molybdenum import ATP-binding protein ModC (359 aa).

Positions 1 to 236 (MNTEIKARFR…IDLPAAFADD (236 aa)) constitute an ABC transporter domain. Residue 34-41 (GHSGSGKT) participates in ATP binding. The region spanning 294–359 (QSSILNCVSA…AQIKAVALLA (66 aa)) is the Mop domain.

It belongs to the ABC transporter superfamily. Molybdate importer (TC 3.A.1.8) family. As to quaternary structure, the complex is composed of two ATP-binding proteins (ModC), two transmembrane proteins (ModB) and a solute-binding protein (ModA).

The protein localises to the cell inner membrane. The enzyme catalyses molybdate(out) + ATP + H2O = molybdate(in) + ADP + phosphate + H(+). Part of the ABC transporter complex ModABC involved in molybdenum import. Responsible for energy coupling to the transport system. The sequence is that of Molybdenum import ATP-binding protein ModC from Dechloromonas aromatica (strain RCB).